A 166-amino-acid polypeptide reads, in one-letter code: MSQYFTLFRIEPAFDIDTENLEQTYRALAARFHPDKFASASAFEQKQAVMMSSTINDAYRTLKNPIDRAAYLLKTSGIDADAPEHTAFAPEFLMQQMEWRETLMEARAGNDLESLKNLDNEIRDEQEKLFCGLKQSFARQDYDTAAQQVRQGRFLDKLRNEISSAL.

The 73-residue stretch at 3 to 75 (QYFTLFRIEP…IDRAAYLLKT (73 aa)) folds into the J domain.

Belongs to the HscB family. As to quaternary structure, interacts with HscA and stimulates its ATPase activity.

Co-chaperone involved in the maturation of iron-sulfur cluster-containing proteins. Seems to help targeting proteins to be folded toward HscA. This chain is Co-chaperone protein HscB homolog, found in Neisseria meningitidis serogroup C (strain 053442).